A 419-amino-acid chain; its full sequence is MFSTSDGILTVEGVKVTEIVRETGTPVYVTSRALLERNLEAYKKAFSNEGLLYAVKANNNLALMRIIASHGFGADVFSDGELYLASLAGFRKDMVLFNGNSKSRKEIEMGVTAGVKFSVDSLDELRTISKIAKEVGKEVEIAFRVNPDVDPKTHPKIATGLRESKFGIPHEMVREAYEMALKLDGVVPVGIHCHIGSQILDLSPFVHALNKVMDIAVDIEKLGVELSFVDMGGGLGIDYEGKGAPTPKDLASAILPEFEGRKADLTSDPQLWLEPGRSIVGNTTVLITRVNAVKKGYKNFVAVDAGFNVLIRPAMYGSYHRVAVANKMDAEPEEVYTVVGPICESGDVLARDRKLPKVEVGDLIAVFDAGAYGFVMSSQYNGRPRCAEVLVSGDRWDVIREKESYGDLIEKQRLPEWLL.

K56 carries the N6-(pyridoxal phosphate)lysine modification. Residues G234 and 274–277 (EPGR) each bind pyridoxal 5'-phosphate. The substrate site is built by R277, R312, and Y316. Residue C343 is the Proton donor of the active site. Substrate is bound by residues E344 and Y372. Y372 serves as a coordination point for pyridoxal 5'-phosphate.

This sequence belongs to the Orn/Lys/Arg decarboxylase class-II family. LysA subfamily. In terms of assembly, homodimer. The cofactor is pyridoxal 5'-phosphate.

It catalyses the reaction meso-2,6-diaminopimelate + H(+) = L-lysine + CO2. It participates in amino-acid biosynthesis; L-lysine biosynthesis via DAP pathway; L-lysine from DL-2,6-diaminopimelate: step 1/1. Its function is as follows. Specifically catalyzes the decarboxylation of meso-diaminopimelate (meso-DAP) to L-lysine. This Archaeoglobus fulgidus (strain ATCC 49558 / DSM 4304 / JCM 9628 / NBRC 100126 / VC-16) protein is Diaminopimelate decarboxylase.